The chain runs to 297 residues: Phospholipid scramblase 2 (297 aa).

The interval 1 to 72 (MRSWNSLFCL…NQPGRPEGVP (72 aa)) is proline-rich domain (PRD). The Cytoplasmic segment spans residues 1 to 276 (MRSWNSLFCL…IQFPRDLDVK (276 aa)). Position 149 is a phosphothreonine; by PKC (T149). Residues C172, C173, C174, C176, and C177 are each lipidated (S-palmitoyl cysteine). The chain crosses the membrane as a helical span at residues 277–293 (MKAVMIGACFLIDYMFF). The Extracellular portion of the chain corresponds to 294-297 (ERTR).

This sequence belongs to the phospholipid scramblase family. Ca(2+) is required as a cofactor. As to expression, expression of isoform 1 seems restricted to testis.

Its subcellular location is the membrane. The protein resides in the nucleus. It carries out the reaction a 1,2-diacyl-sn-glycero-3-phosphocholine(in) = a 1,2-diacyl-sn-glycero-3-phosphocholine(out). May catalyze calcium-induced ATP-independent rapid bidirectional and non-specific movement of phospholipids (lipid scrambling or lipid flip-flop) between the inner and outer leaflet of the plasma membrane. Its function is as follows. Has no phospholipid scramblase activity, due to the lack of a N-terminal proline-rich domain. The protein is Phospholipid scramblase 2 of Homo sapiens (Human).